Reading from the N-terminus, the 325-residue chain is Lipoyl synthase (325 aa).

C68, C73, C79, C94, C98, C101, and S308 together coordinate [4Fe-4S] cluster. The region spanning 80 to 297 (FGGGTATFMI…ARVANELGFT (218 aa)) is the Radical SAM core domain.

It belongs to the radical SAM superfamily. Lipoyl synthase family. It depends on [4Fe-4S] cluster as a cofactor.

It is found in the cytoplasm. The enzyme catalyses [[Fe-S] cluster scaffold protein carrying a second [4Fe-4S](2+) cluster] + N(6)-octanoyl-L-lysyl-[protein] + 2 oxidized [2Fe-2S]-[ferredoxin] + 2 S-adenosyl-L-methionine + 4 H(+) = [[Fe-S] cluster scaffold protein] + N(6)-[(R)-dihydrolipoyl]-L-lysyl-[protein] + 4 Fe(3+) + 2 hydrogen sulfide + 2 5'-deoxyadenosine + 2 L-methionine + 2 reduced [2Fe-2S]-[ferredoxin]. It participates in protein modification; protein lipoylation via endogenous pathway; protein N(6)-(lipoyl)lysine from octanoyl-[acyl-carrier-protein]: step 2/2. Catalyzes the radical-mediated insertion of two sulfur atoms into the C-6 and C-8 positions of the octanoyl moiety bound to the lipoyl domains of lipoate-dependent enzymes, thereby converting the octanoylated domains into lipoylated derivatives. The polypeptide is Lipoyl synthase (Alcanivorax borkumensis (strain ATCC 700651 / DSM 11573 / NCIMB 13689 / SK2)).